A 375-amino-acid polypeptide reads, in one-letter code: 23S rRNA (uracil(747)-C(5))-methyltransferase RlmC (375 aa).

4 residues coordinate [4Fe-4S] cluster: C3, C11, C14, and C87. S-adenosyl-L-methionine contacts are provided by Q212, F241, E262, and N307. The active-site Nucleophile is C334.

The protein belongs to the class I-like SAM-binding methyltransferase superfamily. RNA M5U methyltransferase family. RlmC subfamily.

The catalysed reaction is uridine(747) in 23S rRNA + S-adenosyl-L-methionine = 5-methyluridine(747) in 23S rRNA + S-adenosyl-L-homocysteine + H(+). Catalyzes the formation of 5-methyl-uridine at position 747 (m5U747) in 23S rRNA. This is 23S rRNA (uracil(747)-C(5))-methyltransferase RlmC from Escherichia coli (strain SE11).